An 879-amino-acid chain; its full sequence is Leucine--tRNA ligase (879 aa).

Residues 45 to 55 (PYPSGALHMGH) carry the 'HIGH' region motif. The 'KMSKS' region signature appears at 637–641 (KMSKS). Lys640 is an ATP binding site.

It belongs to the class-I aminoacyl-tRNA synthetase family.

It is found in the cytoplasm. It catalyses the reaction tRNA(Leu) + L-leucine + ATP = L-leucyl-tRNA(Leu) + AMP + diphosphate. The protein is Leucine--tRNA ligase of Xylella fastidiosa (strain M12).